Reading from the N-terminus, the 284-residue chain is uncharacterized protein (284 aa).

A disordered region spans residues 236–284 (IDITNEADSSEIIDSEPSNKDETEKPSAQETDPFDGKPVDIKDDELPFD). 2 stretches are compositionally biased toward basic and acidic residues: residues 252-262 (PSNKDETEKPS) and 269-284 (FDGK…LPFD).

This is an uncharacterized protein from Bacillus subtilis (strain 168).